The chain runs to 398 residues: MDWKITIFTYNLAMKASDSEAVHNMLNGMIDDHTHLVAIGLQEVAHSETIGGAVLTWATTIASWMNTNGRMVLLAKTFQATNQVLIFGRKQLIGQIKRIDYRFQRNTMGGLTGHKGSIGVRLQLASPYSIVFVDSHFIHGPENYGKRVEQYHTNRNCSFPEDKSVRAAFWFGDFNFRVEEDVNTVIRKIKNGTHLELLDTREQLKRALVERDAFIGFHEQPVTFEPTYRVTVGTTEQDGKRVPSWTDRILYKGDGITGLSYTNNKKAVASDHLPVVAMFRVTAPAAPKPQWEVIFEHLPTWYTSIPLVGRFQVNELYYKENGSYRDWIGVFPSSINDCTTATNWIYAATCFEQVIEGSKFLACEFNNIPAGNYRLGYFSCHLHCLVGLSKVFQIVEQP.

It belongs to the inositol 1,4,5-trisphosphate 5-phosphatase type II family. In terms of tissue distribution, expressed in tail, cilia, dendrites, axon and male head.

Its subcellular location is the cytoplasm. In terms of biological role, dephosphorylates a number of phosphatidylinositols. Controls the cellular levels and subcellular distribution of phosphatidylinositol 3,5-bisphosphate and phosphatidylinositol 3,4,5-trisphosphate. Has a role in sperm activation and motility. Influences the localization of the transient receptor potential polycystin (TRPP) complex proteins lov-1 and pkd-2. This chain is Inositol polyphosphate 5-phosphatase, found in Caenorhabditis elegans.